A 142-amino-acid chain; its full sequence is Nucleoside diphosphate kinase (142 aa).

ATP-binding residues include lysine 11, phenylalanine 59, arginine 87, threonine 93, arginine 104, and asparagine 114. The active-site Pros-phosphohistidine intermediate is histidine 117.

It belongs to the NDK family. Homotetramer. Mg(2+) is required as a cofactor.

The protein resides in the cytoplasm. The catalysed reaction is a 2'-deoxyribonucleoside 5'-diphosphate + ATP = a 2'-deoxyribonucleoside 5'-triphosphate + ADP. It carries out the reaction a ribonucleoside 5'-diphosphate + ATP = a ribonucleoside 5'-triphosphate + ADP. Its function is as follows. Major role in the synthesis of nucleoside triphosphates other than ATP. The ATP gamma phosphate is transferred to the NDP beta phosphate via a ping-pong mechanism, using a phosphorylated active-site intermediate. The polypeptide is Nucleoside diphosphate kinase (Photobacterium profundum (strain SS9)).